Consider the following 589-residue polypeptide: 3-hydroxy-3-methylglutaryl coenzyme A reductase 2-B (589 aa).

Residues 1–35 (MDVRRRPVTKTLTAGEPLKSQNQHSSSLKASDALP) lie on the Lumenal side of the membrane. A helical membrane pass occupies residues 36–56 (LPLYLTNGLFFTMFFSVMYFL). The Cytoplasmic segment spans residues 57-79 (LHRWREKIRNSVPLHVVTLSELA). A helical transmembrane segment spans residues 80–100 (ALVLLVASVIYLLGFFGIGFV). Residues 101-544 (QSLIRPSPDS…SKESPGPNSR (444 aa)) are Lumenal-facing. The N-linked (GlcNAc...) asparagine glycan is linked to Asn256. Glu268 acts as the Charge relay system in catalysis. Asn332 carries an N-linked (GlcNAc...) asparagine glycan. Residues Lys400 and Asp476 each act as charge relay system in the active site. A helical transmembrane segment spans residues 545-565 (LLASIVAGSVLAGELSLMSAL). At 566–589 (AAGQLVKSHMKFNRSSKDVSKLSS) the chain is on the cytoplasmic side. His574 functions as the Proton donor in the catalytic mechanism.

Belongs to the HMG-CoA reductase family.

The protein localises to the endoplasmic reticulum membrane. It catalyses the reaction (R)-mevalonate + 2 NADP(+) + CoA = (3S)-3-hydroxy-3-methylglutaryl-CoA + 2 NADPH + 2 H(+). It functions in the pathway metabolic intermediate biosynthesis; (R)-mevalonate biosynthesis; (R)-mevalonate from acetyl-CoA: step 3/3. Functionally, catalyzes the synthesis of mevalonate, the specific precursor of all isoprenoid compounds present in plants. Component of the triterpene saponins (e.g. ginsenosides or panaxosides) and phytosterols biosynthetic pathways. Promotes triterpenes accumulation in roots. The polypeptide is 3-hydroxy-3-methylglutaryl coenzyme A reductase 2-B (Panax ginseng (Korean ginseng)).